Here is a 122-residue protein sequence, read N- to C-terminus: Large ribosomal subunit protein uL18 (122 aa).

Belongs to the universal ribosomal protein uL18 family. As to quaternary structure, part of the 50S ribosomal subunit; part of the 5S rRNA/L5/L18/L25 subcomplex. Contacts the 5S and 23S rRNAs.

This is one of the proteins that bind and probably mediate the attachment of the 5S RNA into the large ribosomal subunit, where it forms part of the central protuberance. In Desulforamulus reducens (strain ATCC BAA-1160 / DSM 100696 / MI-1) (Desulfotomaculum reducens), this protein is Large ribosomal subunit protein uL18.